A 282-amino-acid polypeptide reads, in one-letter code: Undecaprenyl-diphosphatase (282 aa).

7 consecutive transmembrane segments (helical) span residues 40–60 (GAAFSAIVQIGTLAAVLIYFY), 87–107 (MGWMIAAGTMPIVILGLLFKT), 116–136 (LYWISVALIVLALMLTLAEWL), 153–173 (IGWKEALLIGLAQSIALIPGS), 196–216 (FSFLLSLPAVFAAGIYQLYET), 229–249 (NLAVATLFAGIVGYASIAFLI), and 256–276 (STALFILYRIALGVGILGLIA).

The protein belongs to the UppP family.

It is found in the cell inner membrane. It carries out the reaction di-trans,octa-cis-undecaprenyl diphosphate + H2O = di-trans,octa-cis-undecaprenyl phosphate + phosphate + H(+). In terms of biological role, catalyzes the dephosphorylation of undecaprenyl diphosphate (UPP). Confers resistance to bacitracin. This chain is Undecaprenyl-diphosphatase, found in Chlorobium phaeobacteroides (strain BS1).